Reading from the N-terminus, the 149-residue chain is Large ribosomal subunit protein eL24A (149 aa).

Basic and acidic residues-rich tracts occupy residues 93-102 (KRNQRPEVRA) and 116-125 (KAASESEKKA). Residues 93–149 (KRNQRPEVRAAARAAALKQRKDKKAASESEKKAIKAKSAASSARGQAIKNAKAAARH) form a disordered region.

It belongs to the eukaryotic ribosomal protein eL24 family. As to quaternary structure, component of the large ribosomal subunit (LSU). Mature yeast ribosomes consist of a small (40S) and a large (60S) subunit. The 40S small subunit contains 1 molecule of ribosomal RNA (18S rRNA) and at least 33 different proteins. The large 60S subunit contains 3 rRNA molecules (25S, 5.8S and 5S rRNA) and at least 46 different proteins.

The protein localises to the cytoplasm. Functionally, component of the ribosome, a large ribonucleoprotein complex responsible for the synthesis of proteins in the cell. The small ribosomal subunit (SSU) binds messenger RNAs (mRNAs) and translates the encoded message by selecting cognate aminoacyl-transfer RNA (tRNA) molecules. The large subunit (LSU) contains the ribosomal catalytic site termed the peptidyl transferase center (PTC), which catalyzes the formation of peptide bonds, thereby polymerizing the amino acids delivered by tRNAs into a polypeptide chain. The nascent polypeptides leave the ribosome through a tunnel in the LSU and interact with protein factors that function in enzymatic processing, targeting, and the membrane insertion of nascent chains at the exit of the ribosomal tunnel. In Schizosaccharomyces pombe (strain 972 / ATCC 24843) (Fission yeast), this protein is Large ribosomal subunit protein eL24A (rpl2401).